The sequence spans 1034 residues: FERM domain-containing protein 4B (1034 aa).

Residues 59–361 form the FERM domain; it reads RHCQVHLLDD…SQHQFYLDRK (303 aa). Serine 372 carries the post-translational modification Phosphoserine. 2 coiled-coil regions span residues 417–450 and 531–561; these read EVSE…ELKK and KKKR…RCGK. The tract at residues 542 to 971 is necessary for adherens junction and tight junction localization; sequence MKKLQEIENA…TQLTIGLSDY (430 aa). A compositionally biased stretch (low complexity) spans 576–589; it reads PSESSSLSDTTTYD. 4 disordered regions span residues 576–614, 635–698, 712–735, and 752–786; these read PSES…ILPP, DTRQ…LESQ, FSLS…YTSQ, and TTQT…AQKD. Serine 608 is modified (phosphoserine). Composition is skewed to polar residues over residues 635 to 650 and 663 to 674; these read DTRQ…SSPY and MPTTPVLTRNAY. Low complexity predominate over residues 675-685; it reads SSSHLEPESSS. Serine 697 carries the post-translational modification Phosphoserine. Residues 713 to 722 show a composition bias toward low complexity; it reads SLSKSQRSSS. The span at 769 to 781 shows a compositional bias: polar residues; the sequence is QNVSTSNSGSMPN. Residue lysine 882 forms a Glycyl lysine isopeptide (Lys-Gly) (interchain with G-Cter in SUMO2) linkage. Disordered regions lie at residues 905 to 925 and 1004 to 1034; these read RASG…SDRG and DGTD…GTLV. Residues 906–920 show a composition bias toward polar residues; it reads ASGQKDQGHSPQTSF. The residue at position 915 (serine 915) is a Phosphoserine. Residues 1018–1034 show a composition bias toward basic and acidic residues; the sequence is SEQRLFWHEDSKPGTLV. Residue lysine 1029 forms a Glycyl lysine isopeptide (Lys-Gly) (interchain with G-Cter in SUMO2) linkage.

Interacts with CYTH3. Interacts with PARD3. Interacts with CYTH1.

The protein resides in the cytoplasm. It localises to the cytoskeleton. Its subcellular location is the cell junction. The protein localises to the tight junction. It is found in the adherens junction. Its function is as follows. Member of GRP1 signaling complexes that are acutely recruited to plasma membrane ruffles in response to insulin receptor signaling. May function as a scaffolding protein that regulates epithelial cell polarity by connecting ARF6 activation with the PAR3 complex. Plays a redundant role with FRMD4A in epithelial polarization. The polypeptide is FERM domain-containing protein 4B (Homo sapiens (Human)).